The sequence spans 320 residues: MEDLISQLPNELLQEILLNLPTSESVRTSVLPTRWRNLWQSVPGLYLISRQILKFVNLRTPSDVVLEMLISCSPVLQVLSICDVGVDFLKVRSQTLRSLSLWTFIFKGENDDVSLGDDGESGLVIDTPSLEFLRIRDFPLEDFRVESVISSIKMCIDGTYAYTKLQQLPEFKNLTRLYAFLHTDYSEMLPIYLSSSPNLKSIDLELHGYPKMEEIASSPVPKCLQTSIENVKIKMTPKADQEKSRKAETEVANYILENATLLKLTLWLDDEEEDESSSVLEKILTFQNYSFVEVKIGREASKFRLGYTFDEAKHFSRRFL.

An F-box domain is found at 2–48 (EDLISQLPNELLQEILLNLPTSESVRTSVLPTRWRNLWQSVPGLYLI). The FBD domain occupies 212–268 (MEEIASSPVPKCLQTSIENVKIKMTPKADQEKSRKAETEVANYILENATLLKLTLWL).

This chain is Putative FBD-associated F-box protein At3g60710, found in Arabidopsis thaliana (Mouse-ear cress).